The chain runs to 296 residues: UPF0761 membrane protein YE0031 (296 aa).

7 helical membrane passes run 44-64 (LLSL…FPMF), 67-87 (ISIK…GDII), 108-128 (GLIV…NIIW), 136-156 (LVFS…LVGA), 185-205 (LFPL…VPTV), 212-232 (ALIG…GFTM), and 246-266 (VLAV…IVLL).

It belongs to the UPF0761 family.

Its subcellular location is the cell inner membrane. The polypeptide is UPF0761 membrane protein YE0031 (Yersinia enterocolitica serotype O:8 / biotype 1B (strain NCTC 13174 / 8081)).